A 187-amino-acid chain; its full sequence is Peptidoglycan-recognition protein 3 (187 aa).

An N-terminal signal peptide occupies residues 1–19 (MKAFLVALLISIELALVFA). Cystine bridges form between Cys21–Cys144 and Cys58–Cys64. An N-acetylmuramoyl-L-alanine amidase domain is found at 43-170 (KPLKYVIINH…RTIRQTNSPG (128 aa)). The N-linked (GlcNAc...) asparagine glycan is linked to Asn51.

It belongs to the N-acetylmuramoyl-L-alanine amidase 2 family.

The protein resides in the secreted. Functionally, peptidoglycan-recognition protein probably involved in innate immunity by binding to peptidoglycans (PGN) of bacteria and activating the prophenoloxidase (proPO) cascade immune response. Binds to 1,3-beta-D-glucan and PGN. This chain is Peptidoglycan-recognition protein 3 (PGRP-3), found in Holotrichia diomphalia (Korean black chafer).